A 178-amino-acid polypeptide reads, in one-letter code: ATP-dependent protease subunit HslV (178 aa).

Thr-5 is an active-site residue. Residues Ala-160, Cys-163, and Thr-166 each contribute to the Na(+) site.

The protein belongs to the peptidase T1B family. HslV subfamily. A double ring-shaped homohexamer of HslV is capped on each side by a ring-shaped HslU homohexamer. The assembly of the HslU/HslV complex is dependent on binding of ATP.

The protein resides in the cytoplasm. It carries out the reaction ATP-dependent cleavage of peptide bonds with broad specificity.. Its activity is regulated as follows. Allosterically activated by HslU binding. In terms of biological role, protease subunit of a proteasome-like degradation complex believed to be a general protein degrading machinery. The polypeptide is ATP-dependent protease subunit HslV (Magnetococcus marinus (strain ATCC BAA-1437 / JCM 17883 / MC-1)).